The sequence spans 527 residues: Bifunctional methyltransferase (527 aa).

Residues 1-309 (MQYSIKQVLS…GHSRVILFSP (309 aa)) are hemK. The segment at 1–311 (MQYSIKQVLS…SRVILFSPIN (311 aa)) is RF MTase. Residues 149–153 (GTGSG), Asp172, Trp201, Asn216, Glu356, Glu381, Asn408, and Asp430 each bind S-adenosyl-L-methionine. 216-219 (NPPY) contacts substrate. Residues 310 to 527 (INLNRSYARR…IILQHVSGDH (218 aa)) are tRNA (guanine-N(7)-)-methyltransferase. The tract at residues 314 to 527 (RSYARRIGKS…IILQHVSGDH (214 aa)) is tRNA MTase. Asp430 is an active-site residue. Substrate-binding residues include Lys434 and Asp466.

The protein in the C-terminal section; belongs to the class I-like SAM-binding methyltransferase superfamily. TrmB family. In the N-terminal section; belongs to the protein N5-glutamine methyltransferase family. PrmC subfamily.

The catalysed reaction is L-glutaminyl-[peptide chain release factor] + S-adenosyl-L-methionine = N(5)-methyl-L-glutaminyl-[peptide chain release factor] + S-adenosyl-L-homocysteine + H(+). The enzyme catalyses guanosine(46) in tRNA + S-adenosyl-L-methionine = N(7)-methylguanosine(46) in tRNA + S-adenosyl-L-homocysteine. Its function is as follows. Methylates the class 1 translation termination release factors RF1/PrfA and RF2/PrfB on the glutamine residue of the universally conserved GGQ motif. Catalyzes the formation of N(7)-methylguanine at position 46 (m7G46) in tRNA. The chain is Bifunctional methyltransferase (prmC/trmB) from Rickettsia felis (strain ATCC VR-1525 / URRWXCal2) (Rickettsia azadi).